Here is a 203-residue protein sequence, read N- to C-terminus: Dephospho-CoA kinase (203 aa).

Residues 6-203 form the DPCK domain; it reads KVAITGGLSC…ELYQELKIYI (198 aa). 14-19 is a binding site for ATP; it reads SCGKSS.

This sequence belongs to the CoaE family.

The protein resides in the cytoplasm. The catalysed reaction is 3'-dephospho-CoA + ATP = ADP + CoA + H(+). The protein operates within cofactor biosynthesis; coenzyme A biosynthesis; CoA from (R)-pantothenate: step 5/5. Its function is as follows. Catalyzes the phosphorylation of the 3'-hydroxyl group of dephosphocoenzyme A to form coenzyme A. The chain is Dephospho-CoA kinase from Protochlamydia amoebophila (strain UWE25).